A 269-amino-acid chain; its full sequence is Formamidopyrimidine-DNA glycosylase (269 aa).

P2 serves as the catalytic Schiff-base intermediate with DNA. Residue E3 is the Proton donor of the active site. K57 acts as the Proton donor; for beta-elimination activity in catalysis. DNA contacts are provided by H90, R109, and K150. The segment at 235–269 (QVYGRKGEPCRVCGTPIVASKHAQRATFYCRQCQK) adopts an FPG-type zinc-finger fold. The Proton donor; for delta-elimination activity role is filled by R259.

The protein belongs to the FPG family. Monomer. It depends on Zn(2+) as a cofactor.

It carries out the reaction Hydrolysis of DNA containing ring-opened 7-methylguanine residues, releasing 2,6-diamino-4-hydroxy-5-(N-methyl)formamidopyrimidine.. The enzyme catalyses 2'-deoxyribonucleotide-(2'-deoxyribose 5'-phosphate)-2'-deoxyribonucleotide-DNA = a 3'-end 2'-deoxyribonucleotide-(2,3-dehydro-2,3-deoxyribose 5'-phosphate)-DNA + a 5'-end 5'-phospho-2'-deoxyribonucleoside-DNA + H(+). Involved in base excision repair of DNA damaged by oxidation or by mutagenic agents. Acts as a DNA glycosylase that recognizes and removes damaged bases. Has a preference for oxidized purines, such as 7,8-dihydro-8-oxoguanine (8-oxoG). Has AP (apurinic/apyrimidinic) lyase activity and introduces nicks in the DNA strand. Cleaves the DNA backbone by beta-delta elimination to generate a single-strand break at the site of the removed base with both 3'- and 5'-phosphates. This Enterobacter sp. (strain 638) protein is Formamidopyrimidine-DNA glycosylase.